The following is a 610-amino-acid chain: GPI transamidase component GPI16 (610 aa).

Residues 1 to 19 form the signal peptide; sequence MILTLAYFMLGTLLLGVFA. The Lumenal segment spans residues 20 to 551; sequence EDTVSQIGIN…STPDFSMPYN (532 aa). Asn-184 is a glycosylation site (N-linked (GlcNAc...) asparagine). Residues 552-572 form a helical membrane-spanning segment; it reads VIILTSTIMGLIFGMLYNLMV. Topologically, residues 573 to 610 are cytoplasmic; sequence KRMVTVEEADKITLQSGLKYKLLKLKEKFLGKKKTKTD.

It belongs to the PIGT family. In terms of assembly, forms a complex with CDC91, GPI17, GPI8 and GAA1. In terms of processing, the disulfide bond between GPI8 and GPI16 is important for normal enzyme activity.

It localises to the endoplasmic reticulum membrane. The protein operates within glycolipid biosynthesis; glycosylphosphatidylinositol-anchor biosynthesis. In terms of biological role, component of the GPI transamidase complex. Involved in transfer of GPI to proteins. This Saccharomyces cerevisiae (strain ATCC 204508 / S288c) (Baker's yeast) protein is GPI transamidase component GPI16 (GPI16).